A 250-amino-acid chain; its full sequence is Thermostable monoacylglycerol lipase (250 aa).

Phe29 lines the substrate pocket. The active-site Nucleophile is Ser97. Met98 serves as a coordination point for substrate. Active-site charge relay system residues include Asp196 and His226.

It belongs to the lipase/esterase LIP3/BchO family. As to quaternary structure, monomer.

It catalyses the reaction Hydrolyzes glycerol monoesters of long-chain fatty acids.. Its activity is regulated as follows. Not inhibited by cholate, but slightly inhibited by triton X-100 and deoxycholate. Completely inhibited by PMSF (phenylmethylsulfonyl fluoride) at a concentration of 200 uM. In terms of biological role, hydrolyzes monoacylglycerols, with the highest activity occurring with 1-monolauroylglycerol. This Bacillus sp. (strain H-257) protein is Thermostable monoacylglycerol lipase.